The following is a 373-amino-acid chain: 4-hydroxy-3-methylbut-2-en-1-yl diphosphate synthase (flavodoxin) (373 aa).

[4Fe-4S] cluster contacts are provided by cysteine 270, cysteine 273, cysteine 305, and glutamate 312.

Belongs to the IspG family. It depends on [4Fe-4S] cluster as a cofactor.

It carries out the reaction (2E)-4-hydroxy-3-methylbut-2-enyl diphosphate + oxidized [flavodoxin] + H2O + 2 H(+) = 2-C-methyl-D-erythritol 2,4-cyclic diphosphate + reduced [flavodoxin]. It participates in isoprenoid biosynthesis; isopentenyl diphosphate biosynthesis via DXP pathway; isopentenyl diphosphate from 1-deoxy-D-xylulose 5-phosphate: step 5/6. Functionally, converts 2C-methyl-D-erythritol 2,4-cyclodiphosphate (ME-2,4cPP) into 1-hydroxy-2-methyl-2-(E)-butenyl 4-diphosphate. The chain is 4-hydroxy-3-methylbut-2-en-1-yl diphosphate synthase (flavodoxin) from Klebsiella pneumoniae (strain 342).